The following is a 62-amino-acid chain: Photosystem II reaction center protein Z (62 aa).

2 helical membrane-spanning segments follow: residues 8-28 and 41-61; these read TLFALIAVSFLLVIGVPVVFA and FSGVGIWFLLVFAVGILNSFV.

This sequence belongs to the PsbZ family. In terms of assembly, PSII is composed of 1 copy each of membrane proteins PsbA, PsbB, PsbC, PsbD, PsbE, PsbF, PsbH, PsbI, PsbJ, PsbK, PsbL, PsbM, PsbT, PsbY, PsbZ, Psb30/Ycf12, at least 3 peripheral proteins of the oxygen-evolving complex and a large number of cofactors. It forms dimeric complexes.

The protein localises to the plastid. The protein resides in the chloroplast thylakoid membrane. May control the interaction of photosystem II (PSII) cores with the light-harvesting antenna, regulates electron flow through the 2 photosystem reaction centers. PSII is a light-driven water plastoquinone oxidoreductase, using light energy to abstract electrons from H(2)O, generating a proton gradient subsequently used for ATP formation. The chain is Photosystem II reaction center protein Z from Oltmannsiellopsis viridis (Marine flagellate).